A 356-amino-acid chain; its full sequence is Tyrosine recombinase XerS (356 aa).

One can recognise a Core-binding (CB) domain in the interval 16–121 (LMPWYVLEYY…ALSSLYKYLT (106 aa)). One can recognise a Tyr recombinase domain in the interval 169-354 (EFLEYVDCEY…VNDEQKNALD (186 aa)). Active-site residues include arginine 210, lysine 234, histidine 306, arginine 309, and histidine 332. Tyrosine 341 acts as the O-(3'-phospho-DNA)-tyrosine intermediate in catalysis.

It belongs to the 'phage' integrase family. XerS subfamily.

It is found in the cytoplasm. Its activity is regulated as follows. FtsK is required for recombination. In terms of biological role, site-specific tyrosine recombinase, which acts by catalyzing the cutting and rejoining of the recombining DNA molecules. Essential to convert dimers of the bacterial chromosome into monomers to permit their segregation at cell division. The chain is Tyrosine recombinase XerS from Streptococcus mutans serotype c (strain ATCC 700610 / UA159).